The following is a 435-amino-acid chain: UPF0597 protein AHA_4077 (435 aa).

It belongs to the UPF0597 family.

The chain is UPF0597 protein AHA_4077 from Aeromonas hydrophila subsp. hydrophila (strain ATCC 7966 / DSM 30187 / BCRC 13018 / CCUG 14551 / JCM 1027 / KCTC 2358 / NCIMB 9240 / NCTC 8049).